Consider the following 321-residue polypeptide: NADPH-dependent codeinone reductase 1-3 (321 aa).

NADPH contacts are provided by Thr27 and Asp51. Active-site proton donor residues include Tyr56 and His119. His119 contributes to the substrate binding site. NADPH contacts are provided by Gln187, Ser214, Leu216, Ser264, and Arg269. Residues 300–321 form a disordered region; it reads ADFLLSPTGPFKTEEEFWDEKD.

The protein belongs to the aldo/keto reductase family. Latex secreting cells (laticifer cells). Expressed constitutively in all organs with highest levels in capsules. Restricted to the parietal region of sieve elements adjacent or proximal to laticifers in roots, stems, leaves and carpels.

The protein localises to the cytoplasm. Its subcellular location is the cytosol. It carries out the reaction codeine + NADP(+) = codeinone + NADPH + H(+). The enzyme catalyses neopine + NADP(+) = neopinone + NADPH + H(+). It catalyses the reaction morphine + NADP(+) = morphinone + NADPH + H(+). The catalysed reaction is neomorphine + NADP(+) = neomorphinone + NADPH + H(+). It participates in alkaloid biosynthesis; morphine biosynthesis. In terms of biological role, NADPH-dependent codeinone reductase involved in biosynthesis of morphinan-type benzylisoquinoline and opiate alkaloids natural products. Reduces codeinone to codeine in the penultimate step in morphine biosynthesis. Can use morphinone, hydrocodone and hydromorphone as substrate during reductive reaction with NADPH as cofactor, and morphine and dihydrocodeine as substrate during oxidative reaction with NADP as cofactor. Converts morphinone to morphine, and neomorphinone to neomorphine. Reduces irreversibly neopinone, a spontaneous isomer of codeinone, to neopine; in planta, neopine levels are limited to low levels. The protein is NADPH-dependent codeinone reductase 1-3 of Papaver somniferum (Opium poppy).